We begin with the raw amino-acid sequence, 135 residues long: Protein PsiE homolog (135 aa).

4 consecutive transmembrane segments (helical) span residues 14 to 34, 54 to 74, 82 to 102, and 107 to 127; these read LQTI…IFLV, YQLI…ALIV, HFPL…LIIV, and PSDT…LYLA.

The protein belongs to the PsiE family.

It localises to the cell inner membrane. This chain is Protein PsiE homolog, found in Pectobacterium atrosepticum (strain SCRI 1043 / ATCC BAA-672) (Erwinia carotovora subsp. atroseptica).